The primary structure comprises 279 residues: Thymidylate synthase 1 (279 aa).

A dUMP-binding site is contributed by 141 to 142; it reads RR. The Nucleophile role is filled by Cys161. DUMP-binding positions include 181–184, Asn192, and 222–224; these read RSND and HVY. Asp184 is a (6R)-5,10-methylene-5,6,7,8-tetrahydrofolate binding site. Ala278 contributes to the (6R)-5,10-methylene-5,6,7,8-tetrahydrofolate binding site.

The protein belongs to the thymidylate synthase family. Bacterial-type ThyA subfamily. As to quaternary structure, homodimer.

The protein localises to the cytoplasm. The enzyme catalyses dUMP + (6R)-5,10-methylene-5,6,7,8-tetrahydrofolate = 7,8-dihydrofolate + dTMP. The protein operates within pyrimidine metabolism; dTTP biosynthesis. Catalyzes the reductive methylation of 2'-deoxyuridine-5'-monophosphate (dUMP) to 2'-deoxythymidine-5'-monophosphate (dTMP) while utilizing 5,10-methylenetetrahydrofolate (mTHF) as the methyl donor and reductant in the reaction, yielding dihydrofolate (DHF) as a by-product. This enzymatic reaction provides an intracellular de novo source of dTMP, an essential precursor for DNA biosynthesis. The chain is Thymidylate synthase 1 from Bacillus spizizenii (strain ATCC 23059 / NRRL B-14472 / W23) (Bacillus subtilis subsp. spizizenii).